The primary structure comprises 331 residues: LIM/homeobox protein Lhx9 (331 aa).

2 LIM zinc-binding domains span residues 71-132 and 133-194; these read TLCA…FSVK and RCAR…LVQG. Residues 253 to 275 are disordered; sequence ETDLDRDQTYPPSQKTKRMRTSF. Positions 268 to 327 form a DNA-binding region, homeobox; that stretch reads TKRMRTSFKHHQLRTMKSYFAINHNPDAKDLKQLAQKTGLTKRVLQGEQCSGFNSHTTRR.

It localises to the nucleus. May be involved in gonadal development. The protein is LIM/homeobox protein Lhx9 (lhx9) of Xenopus laevis (African clawed frog).